The following is a 107-amino-acid chain: Large ribosomal subunit protein uL24 (107 aa).

This sequence belongs to the universal ribosomal protein uL24 family. As to quaternary structure, part of the 50S ribosomal subunit.

In terms of biological role, one of two assembly initiator proteins, it binds directly to the 5'-end of the 23S rRNA, where it nucleates assembly of the 50S subunit. Its function is as follows. One of the proteins that surrounds the polypeptide exit tunnel on the outside of the subunit. The protein is Large ribosomal subunit protein uL24 of Nitratidesulfovibrio vulgaris (strain DSM 19637 / Miyazaki F) (Desulfovibrio vulgaris).